The following is a 454-amino-acid chain: uncharacterized protein (454 aa).

The first 21 residues, 1 to 21 (MKYKTVKSIPLFLLGSIVFTA), serve as a signal peptide directing secretion. A lipid anchor (N-palmitoyl cysteine) is attached at Cys-22. Cys-22 carries S-diacylglycerol cysteine lipidation. The segment covering 55–64 (ASSSSSTTTS) has biased composition (low complexity). The tract at residues 55-87 (ASSSSSTTTSNDDNNQKGYFLETNRSTGTYDPN) is disordered. The segment covering 65–87 (NDDNNQKGYFLETNRSTGTYDPN) has biased composition (polar residues).

It is found in the cell membrane. This is an uncharacterized protein from Mycoplasma pneumoniae (strain ATCC 29342 / M129 / Subtype 1) (Mycoplasmoides pneumoniae).